The following is a 267-amino-acid chain: Regulatory protein RecX (267 aa).

It belongs to the RecX family.

The protein resides in the cytoplasm. In terms of biological role, modulates RecA activity. The polypeptide is Regulatory protein RecX (Leuconostoc mesenteroides subsp. mesenteroides (strain ATCC 8293 / DSM 20343 / BCRC 11652 / CCM 1803 / JCM 6124 / NCDO 523 / NBRC 100496 / NCIMB 8023 / NCTC 12954 / NRRL B-1118 / 37Y)).